A 147-amino-acid chain; its full sequence is Protein-export protein SecB (147 aa).

Belongs to the SecB family. In terms of assembly, homotetramer, a dimer of dimers. One homotetramer interacts with 1 SecA dimer.

The protein resides in the cytoplasm. One of the proteins required for the normal export of preproteins out of the cell cytoplasm. It is a molecular chaperone that binds to a subset of precursor proteins, maintaining them in a translocation-competent state. It also specifically binds to its receptor SecA. The sequence is that of Protein-export protein SecB from Neisseria gonorrhoeae (strain ATCC 700825 / FA 1090).